A 911-amino-acid chain; its full sequence is Zinc finger protein 721 (911 aa).

The C2H2-type 1; degenerate zinc-finger motif lies at 69-91; sequence FQCNARVKVFSKFANSNKDKTRH. The C2H2-type 2 zinc finger occupies 97 to 119; sequence FKCNECGKSFQKFSDLTQHKGIH. A C2H2-type 3; degenerate zinc finger spans residues 125-147; the sequence is YTCEERGKDFGWYTDLNQHKKIH. The C2H2-type 4 zinc finger occupies 153 to 175; that stretch reads YKCEECGKAFNRSTNLTAHKRIH. The segment at 181–203 adopts a C2H2-type 5; degenerate zinc-finger fold; the sequence is YTGEDRDRAFGWSTNLNEYKKIH. 7 consecutive C2H2-type zinc fingers follow at residues 209 to 231, 237 to 259, 265 to 287, 293 to 315, 321 to 343, 349 to 371, and 377 to 399; these read YKCK…EKIH, YKCK…KRIH, FKCL…RRIH, YTCE…RRIH, YTCG…RRIH, YKCE…KKIH, and YKCE…KRIH. Residues 405-427 form a C2H2-type 13; degenerate zinc finger; sequence YTCEDRGRAFGLSTNLNEYKKIH. 6 consecutive C2H2-type zinc fingers follow at residues 433–455, 461–483, 489–511, 517–539, 545–567, and 573–595; these read YKCK…EKIH, YKCK…KRIH, FECL…RRIH, YTCE…RRIH, and YKCE…KKIH. A Glycyl lysine isopeptide (Lys-Gly) (interchain with G-Cter in SUMO2) cross-link involves residue Lys478. A C2H2-type 20; degenerate zinc finger spans residues 601–623; sequence YKCEECGKDFVWYTDLNQQKKIY. The C2H2-type 21; degenerate zinc finger occupies 629 to 651; it reads YKCEECGKAFAPSTDLNQHTKIL. Residue Lys649 forms a Glycyl lysine isopeptide (Lys-Gly) (interchain with G-Cter in SUMO2) linkage. C2H2-type zinc fingers lie at residues 657 to 679 and 685 to 707; these read YKCE…KKIH and YKCE…RRVH. The segment at 713–735 adopts a C2H2-type 24; degenerate zinc-finger fold; it reads YKCEDRGRSFGWSTNLNEYKKIH. 6 consecutive C2H2-type zinc fingers follow at residues 741-763, 769-791, 797-819, 825-847, 853-875, and 881-903; these read YKCK…EKIH, YKCK…KRIH, FKCL…RRIH, YTCE…RRIH, and YTCG…KKIH. Residue Lys786 forms a Glycyl lysine isopeptide (Lys-Gly) (interchain with G-Cter in SUMO2) linkage.

This sequence belongs to the krueppel C2H2-type zinc-finger protein family.

The protein resides in the nucleus. May be involved in transcriptional regulation. This chain is Zinc finger protein 721 (ZNF721), found in Homo sapiens (Human).